We begin with the raw amino-acid sequence, 305 residues long: Probable 5-dehydro-4-deoxyglucarate dehydratase (305 aa).

Belongs to the DapA family.

It catalyses the reaction 5-dehydro-4-deoxy-D-glucarate + H(+) = 2,5-dioxopentanoate + CO2 + H2O. It participates in carbohydrate acid metabolism; D-glucarate degradation; 2,5-dioxopentanoate from D-glucarate: step 2/2. The polypeptide is Probable 5-dehydro-4-deoxyglucarate dehydratase (Pseudomonas entomophila (strain L48)).